A 197-amino-acid polypeptide reads, in one-letter code: Guanylate kinase (197 aa).

In terms of domain architecture, Guanylate kinase-like spans 9-188 (GRLVVFSAPS…AVEAVILAIS (180 aa)). 16-23 (APSGTGKS) provides a ligand contact to ATP.

Belongs to the guanylate kinase family.

It is found in the cytoplasm. It catalyses the reaction GMP + ATP = GDP + ADP. In terms of biological role, essential for recycling GMP and indirectly, cGMP. This Chlorobium luteolum (strain DSM 273 / BCRC 81028 / 2530) (Pelodictyon luteolum) protein is Guanylate kinase.